A 98-amino-acid polypeptide reads, in one-letter code: NADH-ubiquinone oxidoreductase chain 4L (98 aa).

A run of 3 helical transmembrane segments spans residues 1–21, 29–49, and 61–81; these read MSMV…GLLM, SLLC…VTIL, and IILL…LVMV.

Belongs to the complex I subunit 4L family. In terms of assembly, core subunit of respiratory chain NADH dehydrogenase (Complex I) which is composed of 45 different subunits.

It is found in the mitochondrion inner membrane. The catalysed reaction is a ubiquinone + NADH + 5 H(+)(in) = a ubiquinol + NAD(+) + 4 H(+)(out). Its function is as follows. Core subunit of the mitochondrial membrane respiratory chain NADH dehydrogenase (Complex I) which catalyzes electron transfer from NADH through the respiratory chain, using ubiquinone as an electron acceptor. Part of the enzyme membrane arm which is embedded in the lipid bilayer and involved in proton translocation. In Callorhinus ursinus (Northern fur seal), this protein is NADH-ubiquinone oxidoreductase chain 4L (MT-ND4L).